The following is a 335-amino-acid chain: Methionyl-tRNA formyltransferase (335 aa).

(6S)-5,6,7,8-tetrahydrofolate is bound at residue 122–125; that stretch reads SLLP. A disordered region spans residues 203–222; the sequence is DSHGPLGEPQDPAKVSKAPR.

The protein belongs to the Fmt family.

It carries out the reaction L-methionyl-tRNA(fMet) + (6R)-10-formyltetrahydrofolate = N-formyl-L-methionyl-tRNA(fMet) + (6S)-5,6,7,8-tetrahydrofolate + H(+). Functionally, attaches a formyl group to the free amino group of methionyl-tRNA(fMet). The formyl group appears to play a dual role in the initiator identity of N-formylmethionyl-tRNA by promoting its recognition by IF2 and preventing the misappropriation of this tRNA by the elongation apparatus. The polypeptide is Methionyl-tRNA formyltransferase (Rhodopirellula baltica (strain DSM 10527 / NCIMB 13988 / SH1)).